The primary structure comprises 102 residues: Small ribosomal subunit protein uS10 (102 aa).

This sequence belongs to the universal ribosomal protein uS10 family. In terms of assembly, part of the 30S ribosomal subunit.

In terms of biological role, involved in the binding of tRNA to the ribosomes. The chain is Small ribosomal subunit protein uS10 from Methanosarcina mazei (strain ATCC BAA-159 / DSM 3647 / Goe1 / Go1 / JCM 11833 / OCM 88) (Methanosarcina frisia).